Here is a 259-residue protein sequence, read N- to C-terminus: Putative carbamate hydrolase RutD (259 aa).

The protein belongs to the AB hydrolase superfamily. Hydrolase RutD family.

The enzyme catalyses carbamate + 2 H(+) = NH4(+) + CO2. Its function is as follows. Involved in pyrimidine catabolism. May facilitate the hydrolysis of carbamate, a reaction that can also occur spontaneously. This chain is Putative carbamate hydrolase RutD, found in Pseudomonas savastanoi pv. phaseolicola (strain 1448A / Race 6) (Pseudomonas syringae pv. phaseolicola (strain 1448A / Race 6)).